The primary structure comprises 994 residues: Chloride channel protein E (994 aa).

Residues 1–33 (MTRKENEESESLSSSSSPIDNSNNNNNNNNHSI) form a disordered region. Topologically, residues 1–163 (MTRKENEESE…HWLGKERIST (163 aa)) are cytoplasmic. Residues 11 to 32 (SLSSSSSPIDNSNNNNNNNNHS) show a composition bias toward low complexity. The next 11 membrane-spanning stretches (helical) occupy residues 164 to 184 (LLFI…CDFL), 227 to 247 (IVFV…ISFI), 271 to 291 (VLGF…SAAG), 300 to 320 (FMHA…FGAI), 334 to 354 (ALTS…LFAI), 362 to 382 (VMGN…IFFL), 410 to 430 (LITF…FVFI), 449 to 469 (IILV…AGPL), 505 to 525 (LLVF…LPIP), 527 to 547 (GAIT…GEIL), and 554 to 574 (QAIE…SGTI). Residues 644–705 (MKKNINYLSM…LDIHIENIEQ (62 aa)) form the CBS 1 domain. 3 disordered regions span residues 715 to 767 (FVNN…NSEN), 802 to 822 (IKPN…SDFE), and 846 to 872 (DENS…GDGI). 2 stretches are compositionally biased toward low complexity: residues 717-764 (NNNN…NSNN) and 809-822 (SSSN…SDFE). Residues 859–870 (HDDEDDDEEEGD) show a composition bias toward acidic residues. Residues 944–994 (MDLAPSQVPDLTPLNKVFHLFTMLGLGFTYVTSLGKLVGVITKNSLMEQDL) enclose the CBS 2 domain.

Belongs to the chloride channel (TC 2.A.49) family.

It localises to the membrane. Voltage-gated chloride channel. Chloride channels may have several functions including the regulation of cell volume, membrane potential stabilization and signal transduction. This Dictyostelium discoideum (Social amoeba) protein is Chloride channel protein E (clcE).